The following is a 429-amino-acid chain: Glutamate-1-semialdehyde 2,1-aminomutase (429 aa).

K265 carries the post-translational modification N6-(pyridoxal phosphate)lysine.

This sequence belongs to the class-III pyridoxal-phosphate-dependent aminotransferase family. HemL subfamily. In terms of assembly, homodimer. The cofactor is pyridoxal 5'-phosphate.

The protein localises to the cytoplasm. The enzyme catalyses (S)-4-amino-5-oxopentanoate = 5-aminolevulinate. Its pathway is porphyrin-containing compound metabolism; protoporphyrin-IX biosynthesis; 5-aminolevulinate from L-glutamyl-tRNA(Glu): step 2/2. The sequence is that of Glutamate-1-semialdehyde 2,1-aminomutase from Legionella pneumophila (strain Lens).